We begin with the raw amino-acid sequence, 90 residues long: Small ribosomal subunit protein uS17 (90 aa).

Belongs to the universal ribosomal protein uS17 family. Part of the 30S ribosomal subunit.

Its function is as follows. One of the primary rRNA binding proteins, it binds specifically to the 5'-end of 16S ribosomal RNA. This Cutibacterium acnes (strain DSM 16379 / KPA171202) (Propionibacterium acnes) protein is Small ribosomal subunit protein uS17.